Consider the following 387-residue polypeptide: S-adenosylmethionine synthase (387 aa).

Glu8 contributes to the Mg(2+) binding site. Position 14 (His14) interacts with ATP. Glu42 contributes to the K(+) binding site. L-methionine-binding residues include Glu55 and Gln98. Residues 166–168, 234–237, Asp245, 251–252, Ala268, Lys272, and Lys276 contribute to the ATP site; these read DGK, SGRF, and RK. Asp245 serves as a coordination point for L-methionine. L-methionine is bound at residue Lys276.

Belongs to the AdoMet synthase family. As to quaternary structure, homotetramer. The cofactor is Mn(2+). Mg(2+) is required as a cofactor. It depends on Co(2+) as a cofactor. K(+) serves as cofactor.

It localises to the cytoplasm. The enzyme catalyses L-methionine + ATP + H2O = S-adenosyl-L-methionine + phosphate + diphosphate. Its pathway is amino-acid biosynthesis; S-adenosyl-L-methionine biosynthesis; S-adenosyl-L-methionine from L-methionine: step 1/1. Functionally, catalyzes the formation of S-adenosylmethionine from methionine and ATP. The reaction comprises two steps that are both catalyzed by the same enzyme: formation of S-adenosylmethionine (AdoMet) and triphosphate, and subsequent hydrolysis of the triphosphate. The chain is S-adenosylmethionine synthase (METK-1) from Ostreococcus lucimarinus (strain CCE9901).